The primary structure comprises 66 residues: Large ribosomal subunit protein eL24 (66 aa).

Zn(2+)-binding residues include C7, C10, C33, and C37. Residues 7 to 37 (CSYCGKPFEPGTGKMYVRNDGRVLFFCSRKC) form a C4-type zinc finger.

Belongs to the eukaryotic ribosomal protein eL24 family. Part of the 50S ribosomal subunit. Forms a cluster with proteins L3 and L14. The cofactor is Zn(2+).

Functionally, binds to the 23S rRNA. The protein is Large ribosomal subunit protein eL24 of Pyrococcus furiosus (strain ATCC 43587 / DSM 3638 / JCM 8422 / Vc1).